Consider the following 639-residue polypeptide: 1-deoxy-D-xylulose-5-phosphate synthase (639 aa).

Residues H79 and 120–122 (GHS) each bind thiamine diphosphate. Residue D151 coordinates Mg(2+). Thiamine diphosphate is bound by residues 152–153 (GS), N180, Y289, and E371. N180 lines the Mg(2+) pocket.

This sequence belongs to the transketolase family. DXPS subfamily. In terms of assembly, homodimer. Mg(2+) serves as cofactor. The cofactor is thiamine diphosphate.

The catalysed reaction is D-glyceraldehyde 3-phosphate + pyruvate + H(+) = 1-deoxy-D-xylulose 5-phosphate + CO2. It participates in metabolic intermediate biosynthesis; 1-deoxy-D-xylulose 5-phosphate biosynthesis; 1-deoxy-D-xylulose 5-phosphate from D-glyceraldehyde 3-phosphate and pyruvate: step 1/1. Catalyzes the acyloin condensation reaction between C atoms 2 and 3 of pyruvate and glyceraldehyde 3-phosphate to yield 1-deoxy-D-xylulose-5-phosphate (DXP). This is 1-deoxy-D-xylulose-5-phosphate synthase from Agrobacterium fabrum (strain C58 / ATCC 33970) (Agrobacterium tumefaciens (strain C58)).